The chain runs to 185 residues: Elongation factor P (185 aa).

Belongs to the elongation factor P family.

The protein localises to the cytoplasm. It participates in protein biosynthesis; polypeptide chain elongation. Its function is as follows. Involved in peptide bond synthesis. Stimulates efficient translation and peptide-bond synthesis on native or reconstituted 70S ribosomes in vitro. Probably functions indirectly by altering the affinity of the ribosome for aminoacyl-tRNA, thus increasing their reactivity as acceptors for peptidyl transferase. This chain is Elongation factor P, found in Burkholderia lata (strain ATCC 17760 / DSM 23089 / LMG 22485 / NCIMB 9086 / R18194 / 383).